A 249-amino-acid polypeptide reads, in one-letter code: 2,3-bisphosphoglycerate-dependent phosphoglycerate mutase (249 aa).

Substrate is bound by residues 9-16 (RHGQSQWN), 22-23 (TG), Arg61, 88-91 (ERHY), Lys99, 115-116 (RR), and 184-185 (GN). His10 serves as the catalytic Tele-phosphohistidine intermediate. Glu88 functions as the Proton donor/acceptor in the catalytic mechanism.

It belongs to the phosphoglycerate mutase family. BPG-dependent PGAM subfamily. Homodimer.

It catalyses the reaction (2R)-2-phosphoglycerate = (2R)-3-phosphoglycerate. The protein operates within carbohydrate degradation; glycolysis; pyruvate from D-glyceraldehyde 3-phosphate: step 3/5. In terms of biological role, catalyzes the interconversion of 2-phosphoglycerate and 3-phosphoglycerate. In Stenotrophomonas maltophilia (strain K279a), this protein is 2,3-bisphosphoglycerate-dependent phosphoglycerate mutase.